Here is a 411-residue protein sequence, read N- to C-terminus: LL-diaminopimelate aminotransferase 1 (411 aa).

Substrate-binding residues include Tyr15 and Gly42. Pyridoxal 5'-phosphate-binding positions include Tyr72, 108–109 (SK), Tyr132, Asn187, Tyr218, and 246–248 (SFS). Substrate contacts are provided by Lys109, Tyr132, and Asn187. Residue Lys249 is modified to N6-(pyridoxal phosphate)lysine. 2 residues coordinate pyridoxal 5'-phosphate: Arg257 and Asn292. Positions 292 and 388 each coordinate substrate.

This sequence belongs to the class-I pyridoxal-phosphate-dependent aminotransferase family. LL-diaminopimelate aminotransferase subfamily. In terms of assembly, homodimer. Pyridoxal 5'-phosphate serves as cofactor.

The enzyme catalyses (2S,6S)-2,6-diaminopimelate + 2-oxoglutarate = (S)-2,3,4,5-tetrahydrodipicolinate + L-glutamate + H2O + H(+). The protein operates within amino-acid biosynthesis; L-lysine biosynthesis via DAP pathway; LL-2,6-diaminopimelate from (S)-tetrahydrodipicolinate (aminotransferase route): step 1/1. Its function is as follows. Involved in the synthesis of meso-diaminopimelate (m-DAP or DL-DAP), required for both lysine and peptidoglycan biosynthesis. Catalyzes the direct conversion of tetrahydrodipicolinate to LL-diaminopimelate. In Nostoc sp. (strain PCC 7120 / SAG 25.82 / UTEX 2576), this protein is LL-diaminopimelate aminotransferase 1.